Consider the following 283-residue polypeptide: Bifunctional protein FolD (283 aa).

NADP(+)-binding positions include 164–166, Ser189, and Ile230; that span reads GRS.

Belongs to the tetrahydrofolate dehydrogenase/cyclohydrolase family. In terms of assembly, homodimer.

The catalysed reaction is (6R)-5,10-methylene-5,6,7,8-tetrahydrofolate + NADP(+) = (6R)-5,10-methenyltetrahydrofolate + NADPH. It carries out the reaction (6R)-5,10-methenyltetrahydrofolate + H2O = (6R)-10-formyltetrahydrofolate + H(+). Its pathway is one-carbon metabolism; tetrahydrofolate interconversion. Functionally, catalyzes the oxidation of 5,10-methylenetetrahydrofolate to 5,10-methenyltetrahydrofolate and then the hydrolysis of 5,10-methenyltetrahydrofolate to 10-formyltetrahydrofolate. This Lactobacillus delbrueckii subsp. bulgaricus (strain ATCC 11842 / DSM 20081 / BCRC 10696 / JCM 1002 / NBRC 13953 / NCIMB 11778 / NCTC 12712 / WDCM 00102 / Lb 14) protein is Bifunctional protein FolD.